Here is a 767-residue protein sequence, read N- to C-terminus: GPI ethanolamine phosphate transferase 2 (767 aa).

Residues Asn-186 and Asn-401 are each glycosylated (N-linked (GlcNAc...) asparagine). The next 2 membrane-spanning stretches (helical) occupy residues 407 to 427 and 434 to 454; these read LGLFVAALAVLLSFFPAYGLG and VTFLMLIIISYGGMMFASSYV. The N-linked (GlcNAc...) asparagine glycan is linked to Asn-490. 3 helical membrane passes run 513–533, 538–558, and 595–615; these read ILWALIILTYFDTCMHLCLNS, IWRSAAILTTIAAFFFKLVFV, and IPIFLMFRLQAIILDFLKMSA. Asn-627 is a glycosylation site (N-linked (GlcNAc...) asparagine). Helical transmembrane passes span 655-675, 695-715, and 733-755; these read SVVLVGVLTFISNWAGPIWWA, TLLTFHAATSLMSVMAACTML, and LAWTILNHMFINLPATANVSQVL.

This sequence belongs to the PIGG/PIGN/PIGO family. PIGG subfamily.

It is found in the endoplasmic reticulum membrane. It participates in glycolipid biosynthesis; glycosylphosphatidylinositol-anchor biosynthesis. Ethanolamine phosphate transferase involved in glycosylphosphatidylinositol-anchor biosynthesis. Transfers ethanolamine phosphate to the GPI second mannose. This is GPI ethanolamine phosphate transferase 2 (las21) from Aspergillus fumigatus (strain ATCC MYA-4609 / CBS 101355 / FGSC A1100 / Af293) (Neosartorya fumigata).